Consider the following 450-residue polypeptide: Phosphoglucosamine mutase (450 aa).

The Phosphoserine intermediate role is filled by serine 104. The Mg(2+) site is built by serine 104, aspartate 243, aspartate 245, and aspartate 247. Phosphoserine is present on serine 104.

Belongs to the phosphohexose mutase family. Mg(2+) is required as a cofactor. Activated by phosphorylation.

It catalyses the reaction alpha-D-glucosamine 1-phosphate = D-glucosamine 6-phosphate. In terms of biological role, catalyzes the conversion of glucosamine-6-phosphate to glucosamine-1-phosphate. The polypeptide is Phosphoglucosamine mutase (Cutibacterium acnes (strain DSM 16379 / KPA171202) (Propionibacterium acnes)).